The primary structure comprises 98 residues: Defensin-A (98 aa).

An N-terminal signal peptide occupies residues M1 to T18. A propeptide spanning residues S19–R58 is cleaved from the precursor. 3 cysteine pairs are disulfide-bonded: C61-C88, C74-C94, and C78-C96.

It belongs to the invertebrate defensin family. Type 1 subfamily.

The protein resides in the secreted. Its function is as follows. Antibacterial peptide mostly active against Gram-positive bacteria. Has activity against the bacteria Gram-negative E.cloacae beta12. This chain is Defensin-A (DEFA), found in Aedes aegypti (Yellowfever mosquito).